The sequence spans 627 residues: Myelin-associated glycoprotein (627 aa).

The N-terminal stretch at 1–19 is a signal peptide; sequence MIFLATLPLFWIMISASRG. The interaction with RTN4R and RTN4RL2 stretch occupies residues 20-325; the sequence is GHWGAWMPST…RTVELSVMYA (306 aa). Over 20 to 516 the chain is Extracellular; that stretch reads GHWGAWMPST…HRLMWAKIGP (497 aa). The C-linked (Man) tryptophan glycan is linked to Trp-22. Residues 22–120 enclose the Ig-like V-type domain; it reads WGAWMPSTIS…LGGKYYFRGD (99 aa). Cystine bridges form between Cys-37–Cys-165, Cys-42–Cys-100, and Cys-159–Cys-217. 65–67 lines the a ganglioside GT1b (d18:1(4E)) pocket; it reads YPK. An N-linked (GlcNAc...) asparagine glycan is attached at Asn-99. Residues Arg-118 and 124-128 contribute to the a ganglioside GT1b (d18:1(4E)) site; that span reads YNQYT. Ig-like C2-type domains lie at 139–237, 241–325, 327–412, and 413–508; these read NTPN…LDVK, VIVE…VMYA, WKPT…VEFA, and PIIL…GAHR. Asn-223 and Asn-246 each carry an N-linked (GlcNAc...) asparagine glycan. The cysteines at positions 261 and 305 are disulfide-linked. N-linked (GlcNAc...) asparagine glycans are attached at residues Asn-315 and Asn-332. A disulfide bridge links Cys-347 with Cys-392. N-linked (GlcNAc...) asparagine glycosylation is present at Asn-406. 2 disulfide bridges follow: Cys-421-Cys-430 and Cys-432-Cys-488. Asn-450 and Asn-454 each carry an N-linked (GlcNAc...) asparagine glycan. Residues 517–536 traverse the membrane as a helical segment; the sequence is VGAVVAFAILIAIVCYITQT. Residue Cys-531 is the site of S-palmitoyl cysteine attachment. Residues 537–627 lie on the Cytoplasmic side of the membrane; sequence RRKKNVTESS…LAEYAEIRVK (91 aa). Ser-545, Ser-547, Ser-549, and Ser-591 each carry phosphoserine. Residues 578-627 are required for normal axon myelination in the central nervous system; it reads LGSERRLLGLRGESPELDLSYSHSDLGKRPTKDSYTLTEELAEYAEIRVK.

It belongs to the immunoglobulin superfamily. SIGLEC (sialic acid binding Ig-like lectin) family. Monomer and homodimer. Interacts (via the first three N-terminal Ig-like domains) with RTN4R and RTN4RL2. Interacts with isoform 2 of BSG. Post-translationally, N-glycosylated. Phosphorylated on tyrosine residues. In terms of processing, ubiquitinated, leading to proteasomal degradation. As to expression, detected in the myelin tract in brain, especially in the corpus callosum and in peripheral nerve. Expressed by myelinating glial cells in the central and peripheral nervous system. Detected in oligodendrocyte processes before formation of compact myelin. Restricted to the periaxonal space after myelination. Isoform S-MAG is the predominant isoform in CNS and PNS of the adult (at protein level).

Its subcellular location is the cell membrane. The protein localises to the membrane raft. Functionally, adhesion molecule that mediates interactions between myelinating cells and neurons by binding to neuronal sialic acid-containing gangliosides and to the glycoproteins RTN4R and RTN4RL2. Not required for initial myelination, but seems to play a role in the maintenance of normal axon myelination. Protects motoneurons against apoptosis, also after injury; protection against apoptosis is probably mediated via interaction with neuronal RTN4R and RTN4RL2. Required to prevent degeneration of myelinated axons in adults; this probably depends on binding to gangliosides on the axon cell membrane. Negative regulator of neurite outgrowth that inhibits axon longitudinal growth. Negative regulator of neurite outgrowth; in dorsal root ganglion neurons the inhibition is mediated primarily via binding to neuronal RTN4R or RTN4RL2 and to a lesser degree via binding to neuronal gangliosides. In cerebellar granule cells the inhibition is mediated via binding to neuronal gangliosides. In sensory neurons, inhibition of neurite extension depends only partially on RTN4R, RTN4RL2 and gangliosides. Inhibits axon outgrowth by binding to RTN4R. Preferentially binds to alpha-2,3-linked sialic acid. Binds ganglioside Gt1b. This is Myelin-associated glycoprotein (Mag) from Mus musculus (Mouse).